The primary structure comprises 620 residues: Chaperone protein HscA homolog (620 aa).

This sequence belongs to the heat shock protein 70 family.

In terms of biological role, chaperone involved in the maturation of iron-sulfur cluster-containing proteins. Has a low intrinsic ATPase activity which is markedly stimulated by HscB. The protein is Chaperone protein HscA homolog of Janthinobacterium sp. (strain Marseille) (Minibacterium massiliensis).